A 515-amino-acid chain; its full sequence is Nectin-1 (515 aa).

The signal sequence occupies residues M1–T30. The region spanning Q31 to T141 is the Ig-like V-type domain. Residues Q31–A355 are Extracellular-facing. N-linked (GlcNAc...) asparagine glycans are attached at residues N36, N72, N139, N202, N286, N297, N307, and N332. A disulfide bridge connects residues C51 and C124. 2 consecutive Ig-like C2-type domains span residues K145–V243 and P247–T334. 2 disulfide bridges follow: C172/C226 and C269/C316. The tract at residues W282–T299 is interaction with FGFR. Residues I356–V376 form a helical membrane-spanning segment. Over A377–V515 the chain is Cytoplasmic. Residues Y400–Y486 form a disordered region. Residues S422, S434, and S435 each carry the phosphoserine modification. At Y436 the chain carries Phosphotyrosine. Residues Y436–G445 are compositionally biased toward acidic residues. Residues G446–R464 are compositionally biased toward basic and acidic residues. Phosphoserine is present on S509.

Belongs to the nectin family. (Microbial infection) Interacts with herpes pseudorabies virus/PRV envelope glycoprotein D.

It is found in the cell membrane. It localises to the cell junction. The protein resides in the adherens junction. The protein localises to the presynaptic cell membrane. Its function is as follows. (Microbial infection) Acts as a receptor for herpes simplex virus 1/HHV-1, herpes simplex virus 2/HHV-2, and pseudorabies virus/PRV. The polypeptide is Nectin-1 (Sus scrofa (Pig)).